The sequence spans 267 residues: 2-keto-3-deoxy-L-rhamnonate aldolase (267 aa).

Histidine 49 acts as the Proton acceptor in catalysis. Glutamine 151 contributes to the substrate binding site. Glutamate 153 contacts Mg(2+). Substrate-binding residues include alanine 178 and aspartate 179. Aspartate 179 serves as a coordination point for Mg(2+).

The protein belongs to the HpcH/HpaI aldolase family. KDR aldolase subfamily. As to quaternary structure, homohexamer. The cofactor is Mg(2+).

It catalyses the reaction 2-dehydro-3-deoxy-L-rhamnonate = (S)-lactaldehyde + pyruvate. Functionally, catalyzes the reversible retro-aldol cleavage of 2-keto-3-deoxy-L-rhamnonate (KDR) to pyruvate and lactaldehyde. This chain is 2-keto-3-deoxy-L-rhamnonate aldolase, found in Shigella sonnei (strain Ss046).